Consider the following 353-residue polypeptide: Quinolinate synthase (353 aa).

Residues His47 and Ser68 each contribute to the iminosuccinate site. Cys113 is a [4Fe-4S] cluster binding site. Iminosuccinate contacts are provided by residues 139–141 (YAN) and Ser156. Cys200 lines the [4Fe-4S] cluster pocket. Iminosuccinate is bound by residues 226 to 228 (HPE) and Thr243. Residue Cys297 coordinates [4Fe-4S] cluster.

It belongs to the quinolinate synthase family. Type 1 subfamily. The cofactor is [4Fe-4S] cluster.

Its subcellular location is the cytoplasm. The catalysed reaction is iminosuccinate + dihydroxyacetone phosphate = quinolinate + phosphate + 2 H2O + H(+). It functions in the pathway cofactor biosynthesis; NAD(+) biosynthesis; quinolinate from iminoaspartate: step 1/1. Functionally, catalyzes the condensation of iminoaspartate with dihydroxyacetone phosphate to form quinolinate. The protein is Quinolinate synthase of Pectobacterium atrosepticum (strain SCRI 1043 / ATCC BAA-672) (Erwinia carotovora subsp. atroseptica).